The sequence spans 162 residues: Regulator of ribonuclease activity A (162 aa).

The protein belongs to the RraA family. Homotrimer. Binds to both RNA-binding sites in the C-terminal region of Rne and to RhlB.

It is found in the cytoplasm. Functionally, globally modulates RNA abundance by binding to RNase E (Rne) and regulating its endonucleolytic activity. Can modulate Rne action in a substrate-dependent manner by altering the composition of the degradosome. Modulates RNA-binding and helicase activities of the degradosome. The protein is Regulator of ribonuclease activity A of Haemophilus influenzae (strain ATCC 51907 / DSM 11121 / KW20 / Rd).